We begin with the raw amino-acid sequence, 110 residues long: Large ribosomal subunit protein uL22 (110 aa).

Belongs to the universal ribosomal protein uL22 family. Part of the 50S ribosomal subunit.

Its function is as follows. This protein binds specifically to 23S rRNA; its binding is stimulated by other ribosomal proteins, e.g. L4, L17, and L20. It is important during the early stages of 50S assembly. It makes multiple contacts with different domains of the 23S rRNA in the assembled 50S subunit and ribosome. Functionally, the globular domain of the protein is located near the polypeptide exit tunnel on the outside of the subunit, while an extended beta-hairpin is found that lines the wall of the exit tunnel in the center of the 70S ribosome. The polypeptide is Large ribosomal subunit protein uL22 (Desulfotalea psychrophila (strain LSv54 / DSM 12343)).